Consider the following 245-residue polypeptide: 7-cyano-7-deazaguanine synthase 2 (245 aa).

An ATP-binding site is contributed by 12–22 (FSGGQDSTTCL). Zn(2+) contacts are provided by cysteine 200, cysteine 215, cysteine 218, and cysteine 221.

This sequence belongs to the QueC family. Zn(2+) serves as cofactor.

It catalyses the reaction 7-carboxy-7-deazaguanine + NH4(+) + ATP = 7-cyano-7-deazaguanine + ADP + phosphate + H2O + H(+). The protein operates within purine metabolism; 7-cyano-7-deazaguanine biosynthesis. Functionally, catalyzes the ATP-dependent conversion of 7-carboxy-7-deazaguanine (CDG) to 7-cyano-7-deazaguanine (preQ(0)). This Mesorhizobium japonicum (strain LMG 29417 / CECT 9101 / MAFF 303099) (Mesorhizobium loti (strain MAFF 303099)) protein is 7-cyano-7-deazaguanine synthase 2.